Here is a 198-residue protein sequence, read N- to C-terminus: Ras-like protein 2 (198 aa).

Residue 18–25 (GDGGVGKS) participates in GTP binding. The short motif at 40 to 48 (YDPTIEDSY) is the Effector region element. Residues 65–69 (DTAGQ) and 124–127 (NKCD) each bind GTP. At Cys195 the chain carries Cysteine methyl ester. The S-farnesyl cysteine moiety is linked to residue Cys195. Residues 196-198 (IVM) constitute a propeptide, removed in mature form.

It belongs to the small GTPase superfamily. Ras family.

The protein resides in the cell membrane. The catalysed reaction is GTP + H2O = GDP + phosphate + H(+). Alternates between an inactive form bound to GDP and an active form bound to GTP. Activated by a guanine nucleotide-exchange factor (GEF) and inactivated by a GTPase-activating protein (GAP). This chain is Ras-like protein 2 (RAS2), found in Mucor circinelloides f. lusitanicus (Mucor racemosus var. lusitanicus).